The chain runs to 372 residues: Caytaxin (372 aa).

The interval 1 to 58 (MGTTEATLRMENVDVRDEWQDEDLPRPLPEDTGVERLGGAVEDSSSPPSTLNLSGAHR) is disordered. Basic and acidic residues predominate over residues 11–29 (ENVDVRDEWQDEDLPRPLP). Residues 43–53 (DSSSPPSTLNL) are compositionally biased toward polar residues. Phosphoserine is present on S54. The segment at 115 to 120 (ELEWED) is required for interaction with KLC1. A CRAL-TRIO domain is found at 171-328 (IRPYMKVVTH…CVLQYEEQRL (158 aa)). The mediates interaction with GLS stretch occupies residues 190–372 (AIIVFAACFL…ATEDQETSMS (183 aa)). Residues 329–372 (RAKRESTRPPQPEFLLPRSEEKPETVEEEDRAAEATEDQETSMS) form a disordered region. Residues 354-372 (VEEEDRAAEATEDQETSMS) show a composition bias toward acidic residues.

Interacts with KLC1; may link mitochondria to KLC1 and regulate mitochondria localization into neuron projections. Interacts with GLS; the interaction is direct and may control GLS localization, negatively regulating its activity. Interacts with PIN1 (via WW domain); upon NGF stimulation. The interaction with PIN1 and GLS is competitive. In terms of processing, cleaved by CASP3 and CASP7. The potential C-terminal product released by CASP3 cleavage may inhibit the ERK signaling pathway through MAP2K2. May be ubiquitinated by STUB1. In terms of tissue distribution, neuronal tissues specific. Strongly expressed in brain. Expressed in virtually all parts of the adult brain, including cortex, cerebellum and olfactory bulbs. Enriched in hippocampus, cerebellar cortex, deep cerebellar nuclei, and pontine nuclei (at protein level).

It is found in the cell projection. It localises to the axon. The protein resides in the dendrite. The protein localises to the presynapse. Its subcellular location is the mitochondrion. It is found in the growth cone. It localises to the cytoplasm. Functions in the development of neural tissues, particularly the postnatal maturation of the cerebellar cortex. May play a role in neurotransmission through regulation of glutaminase/GLS, an enzyme responsible for the production in neurons of the glutamate neurotransmitter. Alternatively, may regulate the localization of mitochondria within axons and dendrites. The polypeptide is Caytaxin (Atcay) (Mus musculus (Mouse)).